We begin with the raw amino-acid sequence, 324 residues long: Beta-ketoacyl-[acyl-carrier-protein] synthase III (324 aa).

Active-site residues include Cys-114 and His-246. The tract at residues Gln-247–Arg-251 is ACP-binding. The active site involves Asn-276.

This sequence belongs to the thiolase-like superfamily. FabH family. In terms of assembly, homodimer.

It localises to the cytoplasm. It catalyses the reaction malonyl-[ACP] + acetyl-CoA + H(+) = 3-oxobutanoyl-[ACP] + CO2 + CoA. It functions in the pathway lipid metabolism; fatty acid biosynthesis. Functionally, catalyzes the condensation reaction of fatty acid synthesis by the addition to an acyl acceptor of two carbons from malonyl-ACP. Catalyzes the first condensation reaction which initiates fatty acid synthesis and may therefore play a role in governing the total rate of fatty acid production. Possesses both acetoacetyl-ACP synthase and acetyl transacylase activities. Its substrate specificity determines the biosynthesis of branched-chain and/or straight-chain of fatty acids. The polypeptide is Beta-ketoacyl-[acyl-carrier-protein] synthase III (Campylobacter jejuni (strain RM1221)).